Reading from the N-terminus, the 298-residue chain is uncharacterized protein (298 aa).

Helical transmembrane passes span 5–23 (ILVSLLASFLFGYMYYFST), 33–52 (IFGYRMIFTFPFVLLSVTLF), 72–91 (ALSYLLCGLLMGFQMWLFLW), 101–120 (VSFGYLLLPIVMVAAGRVFF), 127–145 (FKFIAVIIATLGVISNIVL), 149–166 (LSWEAIVICLGYTAYFSI), 175–194 (LASFCLEMLSLMPVSIYFAL), 207–229 (FIWGXLVLLGLISGTALIAYVIA), 238–260 (LGLLGYVETIMMLCVSFLIGEQI), and 265–284 (YPLFICLVIAMILVMVDGVY). The 132-residue stretch at 13–144 (FLFGYMYYFS…ATLGVISNIV (132 aa)) folds into the EamA domain.

This sequence belongs to the EamA transporter family.

The protein localises to the cell membrane. This is an uncharacterized protein from Haemophilus influenzae (strain ATCC 51907 / DSM 11121 / KW20 / Rd).